Here is a 453-residue protein sequence, read N- to C-terminus: Tol-Pal system protein TolB (453 aa).

A signal peptide spans 1–31 (MINNLSISMTKVIKIILAIIIILFNTLSIFA).

This sequence belongs to the TolB family. The Tol-Pal system is composed of five core proteins: the inner membrane proteins TolA, TolQ and TolR, the periplasmic protein TolB and the outer membrane protein Pal. They form a network linking the inner and outer membranes and the peptidoglycan layer.

It is found in the periplasm. In terms of biological role, part of the Tol-Pal system, which plays a role in outer membrane invagination during cell division and is important for maintaining outer membrane integrity. This chain is Tol-Pal system protein TolB, found in Orientia tsutsugamushi (strain Ikeda) (Rickettsia tsutsugamushi).